Consider the following 56-residue polypeptide: Ovomucoid (56 aa).

Residues valine 6–cysteine 56 enclose the Kazal-like domain. 3 disulfides stabilise this stretch: cysteine 8–cysteine 38, cysteine 16–cysteine 35, and cysteine 24–cysteine 56. Residue asparagine 45 is glycosylated (N-linked (GlcNAc...) asparagine).

The protein localises to the secreted. This chain is Ovomucoid, found in Afropavo congensis (Congo peafowl).